Reading from the N-terminus, the 403-residue chain is Protein STRICTOSIDINE SYNTHASE-LIKE 13 (403 aa).

The first 42 residues, 1 to 42, serve as a signal peptide directing secretion; sequence MEKKGQHGTYESMMTHHPILCIIALSVLFIAIDPFHMSPIGG. Residues Asn-66 and Asn-206 are each glycosylated (N-linked (GlcNAc...) asparagine).

It belongs to the strictosidine synthase family.

It is found in the vacuole. Functionally, required for the exine formation during pollen development. This is Protein STRICTOSIDINE SYNTHASE-LIKE 13 from Arabidopsis thaliana (Mouse-ear cress).